The sequence spans 522 residues: Major facilitator-type transporter sorT (522 aa).

The disordered stretch occupies residues 1-21 (MSHTEPKAPVNTGEVENGHLY). A run of 12 helical transmembrane segments spans residues 52 to 72 (WFIA…SSAY), 89 to 109 (VFIV…AVWA), 121 to 141 (QILW…SAGS), 143 to 163 (NVAT…SPLV), 183 to 203 (TIYC…GGFV), 211 to 231 (WVQG…IVFI), 280 to 300 (WIFL…AIIY), 324 to 344 (IGGL…VYAI), 366 to 386 (LPPA…FAWT), 395 to 415 (VSII…LPIM), 427 to 447 (ASVL…FPLF), and 457 to 477 (IHWA…FPLI).

The protein belongs to the major facilitator superfamily. Sugar transporter (TC 2.A.1.1) family.

The protein localises to the membrane. Major facilitator-type transporter; part of the gene cluster that mediates the biosynthesis of sorbicillinoids, a diverse group of yellow secondary metabolites that restrict growth of competing pathogenic fungi but not of bacteria. The protein is Major facilitator-type transporter sorT of Penicillium rubens (strain ATCC 28089 / DSM 1075 / NRRL 1951 / Wisconsin 54-1255) (Penicillium chrysogenum).